Here is a 183-residue protein sequence, read N- to C-terminus: ATP synthase subunit delta (183 aa).

The protein belongs to the ATPase delta chain family. In terms of assembly, F-type ATPases have 2 components, F(1) - the catalytic core - and F(0) - the membrane proton channel. F(1) has five subunits: alpha(3), beta(3), gamma(1), delta(1), epsilon(1). F(0) has three main subunits: a(1), b(2) and c(10-14). The alpha and beta chains form an alternating ring which encloses part of the gamma chain. F(1) is attached to F(0) by a central stalk formed by the gamma and epsilon chains, while a peripheral stalk is formed by the delta and b chains.

It localises to the cell inner membrane. Its function is as follows. F(1)F(0) ATP synthase produces ATP from ADP in the presence of a proton or sodium gradient. F-type ATPases consist of two structural domains, F(1) containing the extramembraneous catalytic core and F(0) containing the membrane proton channel, linked together by a central stalk and a peripheral stalk. During catalysis, ATP synthesis in the catalytic domain of F(1) is coupled via a rotary mechanism of the central stalk subunits to proton translocation. In terms of biological role, this protein is part of the stalk that links CF(0) to CF(1). It either transmits conformational changes from CF(0) to CF(1) or is implicated in proton conduction. The chain is ATP synthase subunit delta from Syntrophobacter fumaroxidans (strain DSM 10017 / MPOB).